Consider the following 397-residue polypeptide: Aspartate/prephenate aminotransferase (397 aa).

Residues glycine 38, tryptophan 124, and asparagine 174 each coordinate L-aspartate. At lysine 238 the chain carries N6-(pyridoxal phosphate)lysine. Arginine 375 is a binding site for L-aspartate.

It belongs to the class-I pyridoxal-phosphate-dependent aminotransferase family. Homodimer. Pyridoxal 5'-phosphate serves as cofactor.

It localises to the cytoplasm. It catalyses the reaction L-aspartate + 2-oxoglutarate = oxaloacetate + L-glutamate. The catalysed reaction is L-arogenate + 2-oxoglutarate = prephenate + L-glutamate. Its function is as follows. Catalyzes the reversible conversion of aspartate and 2-oxoglutarate to glutamate and oxaloacetate. Can also transaminate prephenate in the presence of glutamate, with lower efficiency. The chain is Aspartate/prephenate aminotransferase from Nitrosomonas europaea (strain ATCC 19718 / CIP 103999 / KCTC 2705 / NBRC 14298).